The primary structure comprises 466 residues: MIRRPIYDFAAVFRHLTSPLSTSSRFLFYSSSEHEARKPIVSNPKSPIGSPTRVQKLIASQSDPLLAKEIFDYASQQPNFRHSRSSHLILILKLGRGRYFNLIDDVLAKHRSSGYPLTGEIFTYLIKVYAEAKLPEKVLSTFYKMLEFNFTPQPKHLNRILDVLVSHRGYLQKAFELFKSSRLHGVMPNTRSYNLLMQAFCLNDDLSIAYQLFGKMLERDVVPDVDSYKILIQGFCRKGQVNGAMELLDDMLNKGFVPDRLSYTTLLNSLCRKTQLREAYKLLCRMKLKGCNPDLVHYNTMILGFCREDRAMDARKVLDDMLSNGCSPNSVSYRTLIGGLCDQGMFDEGKKYLEEMISKGFSPHFSVSNCLVKGFCSFGKVEEACDVVEVVMKNGETLHSDTWEMVIPLICNEDESEKIKLFLEDAVKEEITGDTRIVDVGIGLGSYLSSKLQMKRKNARERRRHL.

The transit peptide at 1–34 directs the protein to the mitochondrion; the sequence is MIRRPIYDFAAVFRHLTSPLSTSSRFLFYSSSEH. 8 PPR repeats span residues 118–152, 153–188, 189–223, 224–258, 259–293, 294–328, 329–363, and 364–398; these read TGEIFTYLIKVYAEAKLPEKVLSTFYKMLEFNFTP, QPKHLNRILDVLVSHRGYLQKAFELFKSSRLHGVMP, NTRSYNLLMQAFCLNDDLSIAYQLFGKMLERDVVP, DVDSYKILIQGFCRKGQVNGAMELLDDMLNKGFVP, DRLSYTTLLNSLCRKTQLREAYKLLCRMKLKGCNP, DLVHYNTMILGFCREDRAMDARKVLDDMLSNGCSP, NSVSYRTLIGGLCDQGMFDEGKKYLEEMISKGFSP, and HFSVSNCLVKGFCSFGKVEEACDVVEVVMKNGETL.

The protein belongs to the PPR family. P subfamily.

The protein localises to the mitochondrion. The sequence is that of Pentatricopeptide repeat-containing protein At4g01400, mitochondrial from Arabidopsis thaliana (Mouse-ear cress).